Consider the following 477-residue polypeptide: C4-dicarboxylate transport protein 1 (477 aa).

The next 8 membrane-spanning stretches (helical) occupy residues 21 to 39, 59 to 76, 89 to 111, 162 to 179, 200 to 221, 231 to 253, 342 to 364, and 368 to 387; these read PYVQVLVAILLGVAVGHFY, MIIAPVIFLTVSTGIAGM, AMVYFVTFSTLALIVGLIVGNVI, ILQVLFFSVLFGIALAMV, LVGILMKAAPIGAFGAMAFTIG, LAMLVGTFYLTAFLFVFGVLGAV, VLLLLVAMLSSKGAAGVTGAGFV, and ATLSVVPAVPVAGMALILGV. The tract at residues 435–477 is disordered; the sequence is SAGQPLITPAPSNSAASLPVESPGWSQTPDDRAAGSKQTLAGR.

Belongs to the dicarboxylate/amino acid:cation symporter (DAACS) (TC 2.A.23) family.

Its subcellular location is the cell inner membrane. Functionally, responsible for the transport of dicarboxylates such as succinate, fumarate, and malate from the periplasm across the membrane. This transport system plays an important role in the energy supply of rhizobium-legume symbionts. This Mesorhizobium japonicum (strain LMG 29417 / CECT 9101 / MAFF 303099) (Mesorhizobium loti (strain MAFF 303099)) protein is C4-dicarboxylate transport protein 1 (dctA1).